Here is a 324-residue protein sequence, read N- to C-terminus: MPPAVSSETSTIVPQQVIVHPLVLLSAVDSYNRSAKGTKRRVVGILLGQNNGDVVNVANSYAIPFEEDEKNASVWFLDHNFMESMNEMFKKINANEKLVGWYHTGPQLRPSDLEINNLLKKYIPNPVLVIIDVKPKSVGLPTNAYFAIDEIEDDGSKSSRTFVHLPSSIEAEEAEEIGVEHLLRDTRDASVGTLATRVTQQAQSLQGLGQRLTEIADYLRKVVDGQLPINHAILAELQSVFNLLPNIFSGPVVSEQALESEAQRAFNVNSNDQLMSIYISSIVRAVIALHDLLDSLAASKAMEQQDIKPTVQNGEVSANAEQKA.

Residues 17 to 151 (VIVHPLVLLS…TNAYFAIDEI (135 aa)) enclose the MPN domain.

It belongs to the peptidase M67A family.

Acts as a regulatory subunit of the 26S proteasome which is involved in the ATP-dependent degradation of ubiquitinated proteins. The polypeptide is 26S proteasome regulatory subunit rpn8 (rpn8) (Schizosaccharomyces pombe (strain 972 / ATCC 24843) (Fission yeast)).